The sequence spans 958 residues: N-terminal acetyltransferase B complex subunit NAA25 homolog (958 aa).

TPR repeat units lie at residues 7–42, 78–111, and 320–353; these read AVLE…HPNT, ELTL…DPSE, and FFAY…MLEY.

It belongs to the MDM20/NAA25 family. Component of the N-terminal acetyltransferase B (NatB) complex. Interacts with acer-1. As to expression, expressed in germline and somatic cells.

It is found in the cytoplasm. It localises to the nucleus. The protein localises to the chromosome. Its function is as follows. Non-catalytic subunit of the NatB complex which catalyzes acetylation of the N-terminal methionine residues of proteins beginning with Met-Asp or Met-Glu. Required for chromosome organization and arrangement; specifically for assembly of the central region components of the synaptonemal complex onto chromosomes during meiosis and for DNA double stranded break formation and repair. Acts downstream of xnd-1 to regulate levels of histone acetylation in germ and somatic cell nuclei by controlling acetyl-CoA production through antagonizing the acetyl-CoA hydrolase activity of acer-1. This Caenorhabditis elegans protein is N-terminal acetyltransferase B complex subunit NAA25 homolog.